The chain runs to 88 residues: Large ribosomal subunit protein eL37 (88 aa).

Residues Cys17, Cys20, Cys32, and Cys35 each contribute to the Zn(2+) site. A C4-type zinc finger spans residues 17-35 (CNRCGRRSFHVQKKTCSSC).

The protein belongs to the eukaryotic ribosomal protein eL37 family. It depends on Zn(2+) as a cofactor.

Its function is as follows. Binds to the 23S rRNA. In Candida albicans (Yeast), this protein is Large ribosomal subunit protein eL37 (RPL37).